The primary structure comprises 967 residues: Isoleucine--tRNA ligase 2 (967 aa).

The short motif at Pro-58–His-68 is the 'HIGH' region element. Positions Ala-437 to Gly-446 are enriched in low complexity. The interval Ala-437–Leu-466 is disordered. Glu-598 contacts L-isoleucyl-5'-AMP. The 'KMSKS' region motif lies at Lys-639 to Ser-643. Lys-642 is an ATP binding site. Residues Cys-922, Cys-925, Cys-942, and Cys-945 each contribute to the Zn(2+) site.

Belongs to the class-I aminoacyl-tRNA synthetase family. IleS type 1 subfamily. In terms of assembly, monomer. Zn(2+) is required as a cofactor.

The protein localises to the cytoplasm. The enzyme catalyses tRNA(Ile) + L-isoleucine + ATP = L-isoleucyl-tRNA(Ile) + AMP + diphosphate. In terms of biological role, catalyzes the attachment of isoleucine to tRNA(Ile). As IleRS can inadvertently accommodate and process structurally similar amino acids such as valine, to avoid such errors it has two additional distinct tRNA(Ile)-dependent editing activities. One activity is designated as 'pretransfer' editing and involves the hydrolysis of activated Val-AMP. The other activity is designated 'posttransfer' editing and involves deacylation of mischarged Val-tRNA(Ile). The chain is Isoleucine--tRNA ligase 2 from Burkholderia mallei (strain ATCC 23344).